The following is a 474-amino-acid chain: ATP synthase subunit beta (474 aa).

Gly-152–Thr-159 is an ATP binding site.

It belongs to the ATPase alpha/beta chains family. As to quaternary structure, F-type ATPases have 2 components, CF(1) - the catalytic core - and CF(0) - the membrane proton channel. CF(1) has five subunits: alpha(3), beta(3), gamma(1), delta(1), epsilon(1). CF(0) has three main subunits: a(1), b(2) and c(9-12). The alpha and beta chains form an alternating ring which encloses part of the gamma chain. CF(1) is attached to CF(0) by a central stalk formed by the gamma and epsilon chains, while a peripheral stalk is formed by the delta and b chains.

The protein resides in the cell inner membrane. The catalysed reaction is ATP + H2O + 4 H(+)(in) = ADP + phosphate + 5 H(+)(out). Its function is as follows. Produces ATP from ADP in the presence of a proton gradient across the membrane. The catalytic sites are hosted primarily by the beta subunits. The polypeptide is ATP synthase subunit beta (Paramagnetospirillum magneticum (strain ATCC 700264 / AMB-1) (Magnetospirillum magneticum)).